The sequence spans 167 residues: Small ribosomal subunit protein uS5 (167 aa).

An S5 DRBM domain is found at 11 to 74 (LQEKLIAVNR…EKARRAMINV (64 aa)).

This sequence belongs to the universal ribosomal protein uS5 family. As to quaternary structure, part of the 30S ribosomal subunit. Contacts proteins S4 and S8.

Its function is as follows. With S4 and S12 plays an important role in translational accuracy. Located at the back of the 30S subunit body where it stabilizes the conformation of the head with respect to the body. The sequence is that of Small ribosomal subunit protein uS5 from Serratia proteamaculans (strain 568).